The sequence spans 363 residues: MGMKYVLPLRLIGLAYLLVLFQVHRVTGWELSYEQYHAAHLNEAINPDSGWNKSTKNLLLPFNRTRVPGSEGSREIQRFIIEHFNNTLAGEWAVETQAFEENGYRFNNLVMTLQNNASEYLVLAAHYDTKIAPTGMVGAIDSAASCAALLYTAQFLTHIACHERTKEYNDLESNTVVSNSTLGVKIVFFDGEEAIEEWGPEDSIYGARRLAAQWLADGTMTRIRLLFLLDLLGSGEEEPLVPSYYAETHQEYQLLNRIEDDLLFRRGDEINGESALAAEVARQRKHLDPTDYRFLGLGHSVIGDDHTPFLAAGVPVLHAIPLPFPSTWHTVDDDFRHLDAAETRHWALLVCEFVVQSLRSRNQ.

This is an uncharacterized protein from Saccharomyces cerevisiae (strain ATCC 204508 / S288c) (Baker's yeast).